We begin with the raw amino-acid sequence, 148 residues long: UPF0179 protein Ta1159 (148 aa).

The protein belongs to the UPF0179 family.

The protein is UPF0179 protein Ta1159 of Thermoplasma acidophilum (strain ATCC 25905 / DSM 1728 / JCM 9062 / NBRC 15155 / AMRC-C165).